A 245-amino-acid chain; its full sequence is Small ribosomal subunit protein uS2 (245 aa).

The protein belongs to the universal ribosomal protein uS2 family.

The polypeptide is Small ribosomal subunit protein uS2 (Pseudomonas putida (strain GB-1)).